The following is a 472-amino-acid chain: Ras-GEF domain-containing family member 1B (472 aa).

The N-terminal Ras-GEF domain maps to 34–164 (QDNNLLSGSL…IIQNLIRKLA (131 aa)). One can recognise a Ras-GEF domain in the interval 204 to 452 (DPYTVAQQLT…YLASYESEGP (249 aa)).

Its function is as follows. Guanine nucleotide exchange factor (GEF) with specificity for rap2a and other Ras family proteins (in vitro). This is Ras-GEF domain-containing family member 1B (rasgef1b) from Xenopus tropicalis (Western clawed frog).